The chain runs to 274 residues: Acetyl-coenzyme A carboxylase carboxyl transferase subunit alpha (274 aa).

The region spanning 2-250 is the CoA carboxyltransferase C-terminal domain; sequence NKEFIKSIVV…KKELMNAMNE (249 aa).

This sequence belongs to the AccA family. In terms of assembly, acetyl-CoA carboxylase is a heterohexamer composed of biotin carboxyl carrier protein (AccB), biotin carboxylase (AccC) and two subunits each of ACCase subunit alpha (AccA) and ACCase subunit beta (AccD).

It is found in the cytoplasm. It catalyses the reaction N(6)-carboxybiotinyl-L-lysyl-[protein] + acetyl-CoA = N(6)-biotinyl-L-lysyl-[protein] + malonyl-CoA. It participates in lipid metabolism; malonyl-CoA biosynthesis; malonyl-CoA from acetyl-CoA: step 1/1. In terms of biological role, component of the acetyl coenzyme A carboxylase (ACC) complex. First, biotin carboxylase catalyzes the carboxylation of biotin on its carrier protein (BCCP) and then the CO(2) group is transferred by the carboxyltransferase to acetyl-CoA to form malonyl-CoA. The polypeptide is Acetyl-coenzyme A carboxylase carboxyl transferase subunit alpha (Clostridium botulinum (strain Eklund 17B / Type B)).